The chain runs to 281 residues: Pantothenate synthetase (281 aa).

26–33 (MGSLHEGH) contacts ATP. The active-site Proton donor is histidine 33. Residue glutamine 57 participates in (R)-pantoate binding. Glutamine 57 contacts beta-alanine. 144–147 (GKKD) is a binding site for ATP. Position 150 (glutamine 150) interacts with (R)-pantoate. ATP is bound by residues alanine 173 and 181–184 (LSSR).

Belongs to the pantothenate synthetase family. In terms of assembly, homodimer.

The protein resides in the cytoplasm. The catalysed reaction is (R)-pantoate + beta-alanine + ATP = (R)-pantothenate + AMP + diphosphate + H(+). It participates in cofactor biosynthesis; (R)-pantothenate biosynthesis; (R)-pantothenate from (R)-pantoate and beta-alanine: step 1/1. Its function is as follows. Catalyzes the condensation of pantoate with beta-alanine in an ATP-dependent reaction via a pantoyl-adenylate intermediate. This is Pantothenate synthetase from Methylibium petroleiphilum (strain ATCC BAA-1232 / LMG 22953 / PM1).